The following is a 359-amino-acid chain: Endoglucanase 1 (359 aa).

Disordered regions lie at residues 1 to 26 (MENP…RGGR) and 47 to 72 (TGAS…DAGT). The segment covering 13 to 24 (LRRRRSERRARG) has biased composition (basic residues). Residues 60 to 72 (APSADSGTADAGT) are compositionally biased toward low complexity. The active site involves D154. A disulfide bridge links C155 with C199. D192 serves as the catalytic Proton donor. D339 functions as the Nucleophile in the catalytic mechanism.

This sequence belongs to the glycosyl hydrolase 6 (cellulase B) family.

It carries out the reaction Endohydrolysis of (1-&gt;4)-beta-D-glucosidic linkages in cellulose, lichenin and cereal beta-D-glucans.. Its function is as follows. CMCase I preferentially hydrolyzes carboxymethyl cellulose (CMC). The polypeptide is Endoglucanase 1 (casA) (Streptomyces sp. (strain KSM-9)).